Consider the following 441-residue polypeptide: Ribosomal protein uS12 methylthiotransferase RimO (441 aa).

One can recognise an MTTase N-terminal domain in the interval 7-117 (PKISFVSLGC…VLDAVHRAKP (111 aa)). [4Fe-4S] cluster contacts are provided by cysteine 16, cysteine 52, cysteine 81, cysteine 148, cysteine 152, and cysteine 155. The Radical SAM core domain maps to 134 to 371 (LTPRHYAYLK…MARQQAISAR (238 aa)). Residues 374 to 440 (KRKVGTRQQI…AYDLHGTVAG (67 aa)) form the TRAM domain.

This sequence belongs to the methylthiotransferase family. RimO subfamily. It depends on [4Fe-4S] cluster as a cofactor.

The protein resides in the cytoplasm. The catalysed reaction is L-aspartate(89)-[ribosomal protein uS12]-hydrogen + (sulfur carrier)-SH + AH2 + 2 S-adenosyl-L-methionine = 3-methylsulfanyl-L-aspartate(89)-[ribosomal protein uS12]-hydrogen + (sulfur carrier)-H + 5'-deoxyadenosine + L-methionine + A + S-adenosyl-L-homocysteine + 2 H(+). Catalyzes the methylthiolation of an aspartic acid residue of ribosomal protein uS12. The sequence is that of Ribosomal protein uS12 methylthiotransferase RimO from Rhodopseudomonas palustris (strain HaA2).